The chain runs to 114 residues: Ribosome-binding factor A (114 aa).

Belongs to the RbfA family. As to quaternary structure, monomer. Binds 30S ribosomal subunits, but not 50S ribosomal subunits or 70S ribosomes.

The protein localises to the cytoplasm. Functionally, one of several proteins that assist in the late maturation steps of the functional core of the 30S ribosomal subunit. Associates with free 30S ribosomal subunits (but not with 30S subunits that are part of 70S ribosomes or polysomes). Required for efficient processing of 16S rRNA. May interact with the 5'-terminal helix region of 16S rRNA. The sequence is that of Ribosome-binding factor A from Phytoplasma mali (strain AT).